The primary structure comprises 405 residues: Acetate kinase (405 aa).

Mg(2+) is bound at residue asparagine 7. Lysine 14 is a binding site for ATP. Arginine 98 serves as a coordination point for substrate. The Proton donor/acceptor role is filled by aspartate 156. ATP contacts are provided by residues histidine 215–glycine 219, aspartate 290–arginine 292, and glycine 338–asparagine 342. Glutamate 391 provides a ligand contact to Mg(2+).

The protein belongs to the acetokinase family. Homodimer. It depends on Mg(2+) as a cofactor. The cofactor is Mn(2+).

It is found in the cytoplasm. It catalyses the reaction acetate + ATP = acetyl phosphate + ADP. It functions in the pathway metabolic intermediate biosynthesis; acetyl-CoA biosynthesis; acetyl-CoA from acetate: step 1/2. Functionally, catalyzes the formation of acetyl phosphate from acetate and ATP. Can also catalyze the reverse reaction. This is Acetate kinase from Gloeobacter violaceus (strain ATCC 29082 / PCC 7421).